The following is a 167-amino-acid chain: Transcription factor E (167 aa).

One can recognise an HTH TFE/IIEalpha-type domain in the interval 8-90 (NDKVIRGYLI…LWHLDFSDVE (83 aa)).

Belongs to the TFE family. Monomer. Interaction with RNA polymerase subunits RpoF and RpoE is necessary for Tfe stimulatory transcription activity. Able to interact with Tbp and RNA polymerase in the absence of DNA promoter. Interacts both with the preinitiation and elongation complexes.

Its function is as follows. Transcription factor that plays a role in the activation of archaeal genes transcribed by RNA polymerase. Facilitates transcription initiation by enhancing TATA-box recognition by TATA-box-binding protein (Tbp), and transcription factor B (Tfb) and RNA polymerase recruitment. Not absolutely required for transcription in vitro, but particularly important in cases where Tbp or Tfb function is not optimal. It dynamically alters the nucleic acid-binding properties of RNA polymerases by stabilizing the initiation complex and destabilizing elongation complexes. Seems to translocate with the RNA polymerase following initiation and acts by binding to the non template strand of the transcription bubble in elongation complexes. This is Transcription factor E from Methanosarcina acetivorans (strain ATCC 35395 / DSM 2834 / JCM 12185 / C2A).